Reading from the N-terminus, the 444-residue chain is Cysteine proteinase 2 (444 aa).

Positions 1 to 19 (MATSRAALCAVAVVCVVLA) form a signal peptide, or 27. A propeptide spans 20–124 (AACAPARAIH…HYRKARADLS (105 aa)) (activation peptide). The cysteines at positions 147 and 188 are disulfide-linked. Cysteine 150 is an active-site residue. Residue asparagine 228 is glycosylated (N-linked (GlcNAc...) asparagine). Catalysis depends on residues histidine 289 and asparagine 309. A glycan (N-linked (GlcNAc...) asparagine) is linked at asparagine 372.

It belongs to the peptidase C1 family.

The protein resides in the lysosome. In terms of biological role, the cysteine proteinases have a potential role in host-parasite interaction and virulence. The protein is Cysteine proteinase 2 (CYS2) of Leishmania pifanoi.